We begin with the raw amino-acid sequence, 215 residues long: Probable phosphoglycerate mutase GpmB (215 aa).

Residues 8–15 (RHGETVWN), 21–22 (QG), R58, 82–85 (ELNM), and 151–152 (GM) each bind substrate. H9 functions as the Tele-phosphohistidine intermediate in the catalytic mechanism. E82 functions as the Proton donor/acceptor in the catalytic mechanism.

It belongs to the phosphoglycerate mutase family. GpmB subfamily.

It catalyses the reaction (2R)-2-phosphoglycerate = (2R)-3-phosphoglycerate. The protein operates within carbohydrate degradation; glycolysis; pyruvate from D-glyceraldehyde 3-phosphate: step 3/5. The polypeptide is Probable phosphoglycerate mutase GpmB (Yersinia enterocolitica serotype O:8 / biotype 1B (strain NCTC 13174 / 8081)).